The chain runs to 281 residues: Probable endonuclease 4 (281 aa).

9 residues coordinate Zn(2+): histidine 69, histidine 109, glutamate 145, aspartate 179, histidine 182, histidine 216, aspartate 229, histidine 231, and glutamate 261.

It belongs to the AP endonuclease 2 family. Requires Zn(2+) as cofactor.

It catalyses the reaction Endonucleolytic cleavage to 5'-phosphooligonucleotide end-products.. Functionally, endonuclease IV plays a role in DNA repair. It cleaves phosphodiester bonds at apurinic or apyrimidinic (AP) sites, generating a 3'-hydroxyl group and a 5'-terminal sugar phosphate. The chain is Probable endonuclease 4 from Yersinia enterocolitica serotype O:8 / biotype 1B (strain NCTC 13174 / 8081).